Reading from the N-terminus, the 372-residue chain is GTPase Obg (372 aa).

The Obg domain occupies 1–159; that stretch reads MKFIDEARIE…RMLKLELKVL (159 aa). The interval 128–147 is disordered; the sequence is LHFKSSTNRAPRQKTDGKPG. The 175-residue stretch at 160–334 folds into the OBG-type G domain; that stretch reads ADVGLLGMPN…LVYAIHDYLV (175 aa). GTP-binding positions include 166 to 173, 191 to 195, 213 to 216, 284 to 287, and 315 to 317; these read GMPNAGKS, FTTLA, DIPG, NKLD, and SAL. Positions 173 and 193 each coordinate Mg(2+).

Belongs to the TRAFAC class OBG-HflX-like GTPase superfamily. OBG GTPase family. In terms of assembly, monomer. It depends on Mg(2+) as a cofactor.

It localises to the cytoplasm. Its function is as follows. An essential GTPase which binds GTP, GDP and possibly (p)ppGpp with moderate affinity, with high nucleotide exchange rates and a fairly low GTP hydrolysis rate. Plays a role in control of the cell cycle, stress response, ribosome biogenesis and in those bacteria that undergo differentiation, in morphogenesis control. This chain is GTPase Obg, found in Burkholderia pseudomallei (strain 668).